Here is a 156-residue protein sequence, read N- to C-terminus: 2-C-methyl-D-erythritol 2,4-cyclodiphosphate synthase (156 aa).

Positions 8 and 10 each coordinate a divalent metal cation. 4-CDP-2-C-methyl-D-erythritol 2-phosphate contacts are provided by residues 8 to 10 (DVH) and 34 to 35 (HS). H42 is a binding site for a divalent metal cation. Residues 56–58 (DIG), 61–65 (FPDTD), 100–106 (AQRPKMA), 132–135 (TTEE), and F139 each bind 4-CDP-2-C-methyl-D-erythritol 2-phosphate.

This sequence belongs to the IspF family. As to quaternary structure, homotrimer. A divalent metal cation is required as a cofactor.

The enzyme catalyses 4-CDP-2-C-methyl-D-erythritol 2-phosphate = 2-C-methyl-D-erythritol 2,4-cyclic diphosphate + CMP. Its pathway is isoprenoid biosynthesis; isopentenyl diphosphate biosynthesis via DXP pathway; isopentenyl diphosphate from 1-deoxy-D-xylulose 5-phosphate: step 4/6. In terms of biological role, involved in the biosynthesis of isopentenyl diphosphate (IPP) and dimethylallyl diphosphate (DMAPP), two major building blocks of isoprenoid compounds. Catalyzes the conversion of 4-diphosphocytidyl-2-C-methyl-D-erythritol 2-phosphate (CDP-ME2P) to 2-C-methyl-D-erythritol 2,4-cyclodiphosphate (ME-CPP) with a corresponding release of cytidine 5-monophosphate (CMP). The polypeptide is 2-C-methyl-D-erythritol 2,4-cyclodiphosphate synthase (Clostridium perfringens (strain ATCC 13124 / DSM 756 / JCM 1290 / NCIMB 6125 / NCTC 8237 / Type A)).